A 353-amino-acid polypeptide reads, in one-letter code: Chorismate synthase (353 aa).

NADP(+) contacts are provided by Arg-48 and Arg-54. FMN is bound by residues 125–127 (RSS), 238–239 (NA), Gly-278, 293–297 (KPTSS), and Arg-319.

It belongs to the chorismate synthase family. Homotetramer. The cofactor is FMNH2.

The enzyme catalyses 5-O-(1-carboxyvinyl)-3-phosphoshikimate = chorismate + phosphate. It participates in metabolic intermediate biosynthesis; chorismate biosynthesis; chorismate from D-erythrose 4-phosphate and phosphoenolpyruvate: step 7/7. Functionally, catalyzes the anti-1,4-elimination of the C-3 phosphate and the C-6 proR hydrogen from 5-enolpyruvylshikimate-3-phosphate (EPSP) to yield chorismate, which is the branch point compound that serves as the starting substrate for the three terminal pathways of aromatic amino acid biosynthesis. This reaction introduces a second double bond into the aromatic ring system. This Bordetella pertussis (strain Tohama I / ATCC BAA-589 / NCTC 13251) protein is Chorismate synthase.